The following is a 178-amino-acid chain: ATP synthase subunit delta (178 aa).

It belongs to the ATPase delta chain family. F-type ATPases have 2 components, F(1) - the catalytic core - and F(0) - the membrane proton channel. F(1) has five subunits: alpha(3), beta(3), gamma(1), delta(1), epsilon(1). F(0) has three main subunits: a(1), b(2) and c(10-14). The alpha and beta chains form an alternating ring which encloses part of the gamma chain. F(1) is attached to F(0) by a central stalk formed by the gamma and epsilon chains, while a peripheral stalk is formed by the delta and b chains.

The protein localises to the cell membrane. F(1)F(0) ATP synthase produces ATP from ADP in the presence of a proton or sodium gradient. F-type ATPases consist of two structural domains, F(1) containing the extramembraneous catalytic core and F(0) containing the membrane proton channel, linked together by a central stalk and a peripheral stalk. During catalysis, ATP synthesis in the catalytic domain of F(1) is coupled via a rotary mechanism of the central stalk subunits to proton translocation. Functionally, this protein is part of the stalk that links CF(0) to CF(1). It either transmits conformational changes from CF(0) to CF(1) or is implicated in proton conduction. The sequence is that of ATP synthase subunit delta from Desulfitobacterium hafniense (strain Y51).